Here is a 96-residue protein sequence, read N- to C-terminus: Large ribosomal subunit protein uL23 (96 aa).

This sequence belongs to the universal ribosomal protein uL23 family. Part of the 50S ribosomal subunit. Contacts protein L29, and trigger factor when it is bound to the ribosome.

In terms of biological role, one of the early assembly proteins it binds 23S rRNA. One of the proteins that surrounds the polypeptide exit tunnel on the outside of the ribosome. Forms the main docking site for trigger factor binding to the ribosome. This chain is Large ribosomal subunit protein uL23, found in Nitratidesulfovibrio vulgaris (strain DSM 19637 / Miyazaki F) (Desulfovibrio vulgaris).